The following is a 327-amino-acid chain: Phosphate acyltransferase (327 aa).

This sequence belongs to the PlsX family. In terms of assembly, homodimer. Probably interacts with PlsY.

It is found in the cytoplasm. It carries out the reaction a fatty acyl-[ACP] + phosphate = an acyl phosphate + holo-[ACP]. Its pathway is lipid metabolism; phospholipid metabolism. In terms of biological role, catalyzes the reversible formation of acyl-phosphate (acyl-PO(4)) from acyl-[acyl-carrier-protein] (acyl-ACP). This enzyme utilizes acyl-ACP as fatty acyl donor, but not acyl-CoA. This Thermotoga maritima (strain ATCC 43589 / DSM 3109 / JCM 10099 / NBRC 100826 / MSB8) protein is Phosphate acyltransferase.